Reading from the N-terminus, the 386-residue chain is Lipoyl synthase, mitochondrial (386 aa).

Residues 1–48 (MHGRRHLAASLTRALTQAPSRSISSTPSLLQTLDPSVPSPSPPPAAEP) are disordered. Positions 13 to 34 (RALTQAPSRSISSTPSLLQTLD) are enriched in polar residues. Residues 37–46 (VPSPSPPPAA) show a composition bias toward pro residues. Residues C113, C118, C124, C144, C148, C151, and S360 each coordinate [4Fe-4S] cluster. One can recognise a Radical SAM core domain in the interval 129–349 (ETGTATATIM…RALGVEMGFR (221 aa)).

It belongs to the radical SAM superfamily. Lipoyl synthase family. Requires [4Fe-4S] cluster as cofactor.

It localises to the mitochondrion. It carries out the reaction [[Fe-S] cluster scaffold protein carrying a second [4Fe-4S](2+) cluster] + N(6)-octanoyl-L-lysyl-[protein] + 2 oxidized [2Fe-2S]-[ferredoxin] + 2 S-adenosyl-L-methionine + 4 H(+) = [[Fe-S] cluster scaffold protein] + N(6)-[(R)-dihydrolipoyl]-L-lysyl-[protein] + 4 Fe(3+) + 2 hydrogen sulfide + 2 5'-deoxyadenosine + 2 L-methionine + 2 reduced [2Fe-2S]-[ferredoxin]. It participates in protein modification; protein lipoylation via endogenous pathway; protein N(6)-(lipoyl)lysine from octanoyl-[acyl-carrier-protein]: step 2/2. Its function is as follows. Catalyzes the radical-mediated insertion of two sulfur atoms into the C-6 and C-8 positions of the octanoyl moiety bound to the lipoyl domains of lipoate-dependent enzymes, thereby converting the octanoylated domains into lipoylated derivatives. This Sorghum bicolor (Sorghum) protein is Lipoyl synthase, mitochondrial.